A 305-amino-acid chain; its full sequence is UDP-3-O-acyl-N-acetylglucosamine deacetylase (305 aa).

Residues His79, His238, and Asp242 each coordinate Zn(2+). The active-site Proton donor is His265.

Belongs to the LpxC family. Requires Zn(2+) as cofactor.

The catalysed reaction is a UDP-3-O-[(3R)-3-hydroxyacyl]-N-acetyl-alpha-D-glucosamine + H2O = a UDP-3-O-[(3R)-3-hydroxyacyl]-alpha-D-glucosamine + acetate. Its pathway is glycolipid biosynthesis; lipid IV(A) biosynthesis; lipid IV(A) from (3R)-3-hydroxytetradecanoyl-[acyl-carrier-protein] and UDP-N-acetyl-alpha-D-glucosamine: step 2/6. Functionally, catalyzes the hydrolysis of UDP-3-O-myristoyl-N-acetylglucosamine to form UDP-3-O-myristoylglucosamine and acetate, the committed step in lipid A biosynthesis. This chain is UDP-3-O-acyl-N-acetylglucosamine deacetylase, found in Escherichia fergusonii (strain ATCC 35469 / DSM 13698 / CCUG 18766 / IAM 14443 / JCM 21226 / LMG 7866 / NBRC 102419 / NCTC 12128 / CDC 0568-73).